Consider the following 445-residue polypeptide: Bifunctional protein GlmU (445 aa).

A pyrophosphorylase region spans residues 1–218 (MRALVLAAGK…LLEITGVNTR (218 aa)). UDP-N-acetyl-alpha-D-glucosamine is bound by residues 6–9 (LAAG), Lys-20, Gln-69, 74–75 (GT), 96–98 (YGD), Gly-134, Glu-147, Asn-162, and Asn-216. Asp-98 contributes to the Mg(2+) binding site. Asn-216 contributes to the Mg(2+) binding site. The segment at 219-239 (KTLVWLEEQLRMRKIEELLEN) is linker. The interval 240 to 445 (GVTILDPATT…GWVLKKRKEE (206 aa)) is N-acetyltransferase. UDP-N-acetyl-alpha-D-glucosamine contacts are provided by Arg-321 and Lys-339. The Proton acceptor role is filled by His-351. UDP-N-acetyl-alpha-D-glucosamine-binding residues include Tyr-354 and Asn-365. Acetyl-CoA is bound by residues Ala-368, 374–375 (NY), Ser-393, Ala-411, and Arg-428.

The protein in the N-terminal section; belongs to the N-acetylglucosamine-1-phosphate uridyltransferase family. In the C-terminal section; belongs to the transferase hexapeptide repeat family. Homotrimer. Mg(2+) is required as a cofactor.

The protein resides in the cytoplasm. The enzyme catalyses alpha-D-glucosamine 1-phosphate + acetyl-CoA = N-acetyl-alpha-D-glucosamine 1-phosphate + CoA + H(+). The catalysed reaction is N-acetyl-alpha-D-glucosamine 1-phosphate + UTP + H(+) = UDP-N-acetyl-alpha-D-glucosamine + diphosphate. It participates in nucleotide-sugar biosynthesis; UDP-N-acetyl-alpha-D-glucosamine biosynthesis; N-acetyl-alpha-D-glucosamine 1-phosphate from alpha-D-glucosamine 6-phosphate (route II): step 2/2. It functions in the pathway nucleotide-sugar biosynthesis; UDP-N-acetyl-alpha-D-glucosamine biosynthesis; UDP-N-acetyl-alpha-D-glucosamine from N-acetyl-alpha-D-glucosamine 1-phosphate: step 1/1. The protein operates within bacterial outer membrane biogenesis; LPS lipid A biosynthesis. Its function is as follows. Catalyzes the last two sequential reactions in the de novo biosynthetic pathway for UDP-N-acetylglucosamine (UDP-GlcNAc). The C-terminal domain catalyzes the transfer of acetyl group from acetyl coenzyme A to glucosamine-1-phosphate (GlcN-1-P) to produce N-acetylglucosamine-1-phosphate (GlcNAc-1-P), which is converted into UDP-GlcNAc by the transfer of uridine 5-monophosphate (from uridine 5-triphosphate), a reaction catalyzed by the N-terminal domain. The protein is Bifunctional protein GlmU of Thermotoga maritima (strain ATCC 43589 / DSM 3109 / JCM 10099 / NBRC 100826 / MSB8).